We begin with the raw amino-acid sequence, 119 residues long: Immunoglobulin lambda variable 4-69 (119 aa).

The N-terminal stretch at 1–20 (MAWTPLLFLTLLLHCTGSLS) is a signal peptide. A framework-1 region spans residues 21–45 (QLVLTQSPSASASLGASVKLTCTLS). Positions 21 to 119 (QLVLTQSPSA…YYCQTWGTGI (99 aa)) constitute an Ig-like domain. Cysteines 42 and 112 form a disulfide. A complementarity-determining-1 region spans residues 46–52 (SGHSSYA). Residues 53-69 (IAWHQQQPEKGPRYLMK) form a framework-2 region. The tract at residues 70–76 (LNSDGSH) is complementarity-determining-2. A disordered region spans residues 73–92 (DGSHSKGDGIPDRFSGSSSG). Residues 77 to 112 (SKGDGIPDRFSGSSSGAERYLTISSLQSEDEADYYC) are framework-3. The segment at 113–119 (QTWGTGI) is complementarity-determining-3.

As to quaternary structure, immunoglobulins are composed of two identical heavy chains and two identical light chains; disulfide-linked.

Its subcellular location is the secreted. It localises to the cell membrane. Functionally, v region of the variable domain of immunoglobulin light chains that participates in the antigen recognition. Immunoglobulins, also known as antibodies, are membrane-bound or secreted glycoproteins produced by B lymphocytes. In the recognition phase of humoral immunity, the membrane-bound immunoglobulins serve as receptors which, upon binding of a specific antigen, trigger the clonal expansion and differentiation of B lymphocytes into immunoglobulins-secreting plasma cells. Secreted immunoglobulins mediate the effector phase of humoral immunity, which results in the elimination of bound antigens. The antigen binding site is formed by the variable domain of one heavy chain, together with that of its associated light chain. Thus, each immunoglobulin has two antigen binding sites with remarkable affinity for a particular antigen. The variable domains are assembled by a process called V-(D)-J rearrangement and can then be subjected to somatic hypermutations which, after exposure to antigen and selection, allow affinity maturation for a particular antigen. The sequence is that of Immunoglobulin lambda variable 4-69 from Homo sapiens (Human).